The sequence spans 257 residues: Isoprenyl transferase (257 aa).

Aspartate 37 is a catalytic residue. Residue aspartate 37 coordinates Mg(2+). Substrate is bound by residues 38–41, tryptophan 42, arginine 50, histidine 54, and 82–84; these read GNGR and STE. The Proton acceptor role is filled by asparagine 85. Substrate-binding positions include tryptophan 86, arginine 88, arginine 205, and 211–213; that span reads RLS. Glutamate 224 contributes to the Mg(2+) binding site.

The protein belongs to the UPP synthase family. In terms of assembly, homodimer. Requires Mg(2+) as cofactor.

Its function is as follows. Catalyzes the condensation of isopentenyl diphosphate (IPP) with allylic pyrophosphates generating different type of terpenoids. This Shouchella clausii (strain KSM-K16) (Alkalihalobacillus clausii) protein is Isoprenyl transferase.